A 473-amino-acid polypeptide reads, in one-letter code: High-affinity proline transporter PutP (473 aa).

The next 12 membrane-spanning stretches (helical) occupy residues 32 to 52 (LSAG…GAMF), 56 to 76 (LSGA…WLYV), 114 to 134 (IVIL…GGVL), 146 to 166 (GLWI…FLAV), 171 to 191 (FVQG…TFFH), 218 to 238 (VLGI…PHII), 256 to 276 (IGMG…LGGI), 299 to 319 (ILFH…AIMS), 350 to 370 (LVFL…VLAW), 376 to 396 (ILGL…PVVL), 408 to 428 (GALA…NAGL), and 431 to 451 (FLYE…FVSI).

It belongs to the sodium:solute symporter (SSF) (TC 2.A.21) family.

It is found in the cell membrane. The catalysed reaction is L-proline(in) + Na(+)(in) = L-proline(out) + Na(+)(out). Catalyzes the high-affinity uptake of extracellular proline. Important for the use of proline as a sole carbon and energy source or a sole nitrogen source. This is High-affinity proline transporter PutP from Bacillus subtilis (strain 168).